The following is a 341-amino-acid chain: Vacuolar morphogenesis protein 7 homolog (341 aa).

The PX domain maps to 1 to 115 (MALKIKIPET…KFLNIKDESE (115 aa)). Residues 214–233 (NSPVAPPSASSQLNSSNPSS) are compositionally biased toward low complexity. The tract at residues 214–265 (NSPVAPPSASSQLNSSNPSSPFRPLSASTDKQSNTSLNRVLGKNRMPETQTT) is disordered. Polar residues predominate over residues 239-251 (SASTDKQSNTSLN). The 63-residue stretch at 278 to 340 (NQTMEDQDMQ…HRTRAGLRKL (63 aa)) folds into the t-SNARE coiled-coil homology domain.

In terms of assembly, possibly multimeric.

The protein resides in the vacuole. Functionally, essential for proper morphogenesis of the vacuole. May exist as structural reinforcement on the surface of the vacuolar membrane and be required for maintenance against rupture by osmotic pressure. The protein is Vacuolar morphogenesis protein 7 homolog of Schizosaccharomyces pombe (strain 972 / ATCC 24843) (Fission yeast).